Here is a 143-residue protein sequence, read N- to C-terminus: MESTLGSDLSRLVRVWRALIDQRLKPLELTQTHWVTLYNIHRLPPDQSQIQLAKAIGIEQPSLVRTLDQLEDKGLITRHICANDRRAKRIKLTDDAEPVIKEVTGVISLTRSEILDGISTDEIALLTNLVERLEQNIIHLQNK.

In terms of domain architecture, HTH marR-type spans 2–135 (ESTLGSDLSR…LTNLVERLEQ (134 aa)). The segment at residues 49–72 (QIQLAKAIGIEQPSLVRTLDQLED) is a DNA-binding region (H-T-H motif).

This sequence belongs to the SlyA family. In terms of assembly, homodimer.

Transcription regulator that can specifically activate or repress expression of target genes. The sequence is that of Transcriptional regulator SlyA from Edwardsiella tarda.